Reading from the N-terminus, the 557-residue chain is E3 ubiquitin-protein ligase rnf168 (557 aa).

The RING-type zinc finger occupies 16 to 55; the sequence is CPICQEILLEPVTLPCKHTLCNPCFQMTVEKASLCCPFCR. The short motif at 112–130 is the LR motif 1 element; that stretch reads LCQPGEIRQEYEAEVSKIE. The UMI motif motif lies at 145–153; that stretch reads EDYIQKLLA. 2 short sequence motifs (MIU motif) span residues 170-193 and 422-445; these read MEEQ…VSNA and RRRQ…KELK. An LR motif 2 motif is present at residues 449–460; sequence RGKGSPDEYELR. Positions 482 to 543 are disordered; sequence PLRKEIPVQD…GINVLKPINK (62 aa). Residues 490–500 are compositionally biased toward polar residues; sequence QDNSRNTQSEY. Residues 508–521 are compositionally biased toward basic residues; that stretch reads PSRKNSVRSARVRQ.

This sequence belongs to the RNF168 family. Monomer.

The protein resides in the nucleus. The enzyme catalyses S-ubiquitinyl-[E2 ubiquitin-conjugating enzyme]-L-cysteine + [acceptor protein]-L-lysine = [E2 ubiquitin-conjugating enzyme]-L-cysteine + N(6)-ubiquitinyl-[acceptor protein]-L-lysine.. The protein operates within protein modification; protein ubiquitination. In terms of biological role, E3 ubiquitin-protein ligase required for accumulation of repair proteins to sites of DNA damage. Acts with ube2n/ubc13 to amplify the rnf8-dependent histone ubiquitination. Recruited to sites of DNA damage at double-strand breaks (DSBs) by binding to ubiquitinated histone H2A and ubiquitinates histone H2A and H2AX, leading to amplify the rnf8-dependent H2A ubiquitination and promoting the formation of 'Lys-63'-linked ubiquitin conjugates. This leads to concentrate ubiquitinated histones H2A and H2AX at DNA lesions to the threshold required for recruitment of tp53bp1 and brca1. Catalyzes monoubiquitination of 'Lys-13' and 'Lys-15' of nucleosomal histone H2A (H2AK13Ub and H2AK15Ub, respectively). This Xenopus laevis (African clawed frog) protein is E3 ubiquitin-protein ligase rnf168.